The following is a 301-amino-acid chain: Phosducin-like protein (301 aa).

Position 2 is an N-acetylthreonine (T2). A disordered region spans residues 17-60; it reads YSTSEDEDSDHEDKDRGRGAPAISSTPAEAELAGEGISINTGPK. Phosphoserine occurs at positions 20, 25, 226, 293, and 296. A Phosducin domain is found at 36–299; the sequence is APAISSTPAE…TCHSEDSDLE (264 aa). Residues 158-301 form a thioredoxin fold region; sequence FKQVFEIPSG…HSEDSDLEID (144 aa).

The protein belongs to the phosducin family. In terms of assembly, forms a complex with the beta and gamma subunits of the GTP-binding protein, transducin. Interacts with the CCT chaperonin complex.

The protein localises to the cell projection. The protein resides in the cilium. Functions as a co-chaperone for CCT in the assembly of heterotrimeric G protein complexes, facilitates the assembly of both Gbeta-Ggamma and RGS-Gbeta5 heterodimers. Also acts as a positive regulator of hedgehog signaling and regulates ciliary function. The polypeptide is Phosducin-like protein (Pdcl) (Mus musculus (Mouse)).